We begin with the raw amino-acid sequence, 40 residues long: Auxin-responsive endogenous peptide 1 (40 aa).

A helical transmembrane segment spans residues 7 to 29 (LIYRLVVRCFLDYSICAPFYFYH).

As to expression, expressed in cotyledons, hypocotyls, roots, newly developing leaves and shoot apical meristem. Not detected in flowers, siliques or mature leaves.

It is found in the cytoplasm. It localises to the nucleus. The protein localises to the membrane. Functionally, negative regulator of the auxin response. The sequence is that of Auxin-responsive endogenous peptide 1 from Arabidopsis thaliana (Mouse-ear cress).